The primary structure comprises 479 residues: MASLQSGGDAAANGVDADVDGAASPPSAKRPRAGAGAAAITDAEVRAEFAHHDRAVARLNNGTFGCCPASVLAARARWQRLFLSQPDAFYFHHLQPGLARSRAAVAAAVGAGDASEVSLVDNVTTAAAIIMQHVAWSFAEGDFARGDVVLMFLYTYCSIKNSIHAYVARAGATVVEVPLPFPVSSPDAIVAEFRAALAVARDGGRRRVRLAVIDHITAMPTVLIPVKELVAICREEGVDKVFVDAAHAVGQVPVDVRDIGADFYASNLHKWFFCPSAVAFIHTRKDDPVSSKLHHPVVSSEYGNGLPMESAWIGVRDYSAQLVVPDVVDFVNRFDGGVEGIRRRNHDKVVEMGTMLAAAWGTFLGTPPEMCGSMLMVGLPGSLGVGSEDDAVGLRTMLRKQFKVEVPLYYNSKAAAADAPPEMVKDGNGDPVTGYVRISHQVYNVREEYEALRDAVAKLVADGFTCRKLRPPEKEETLA.

A disordered region spans residues 1–36 (MASLQSGGDAAANGVDADVDGAASPPSAKRPRAGAG). Residues 7–36 (GGDAAANGVDADVDGAASPPSAKRPRAGAG) are compositionally biased toward low complexity. Lys270 carries the post-translational modification N6-(pyridoxal phosphate)lysine.

It belongs to the class-V pyridoxal-phosphate-dependent aminotransferase family. It depends on pyridoxal 5'-phosphate as a cofactor.

The enzyme catalyses L-cysteine + H2O = hydrogen sulfide + pyruvate + NH4(+) + H(+). Catalyzes the production of hydrogen sulfide (H2S) from cysteine. The protein is Putative L-cysteine desulfhydrase 2 of Oryza sativa subsp. japonica (Rice).